The following is a 303-amino-acid chain: Protoporphyrin uptake protein 1 (303 aa).

Residues 1–18 (MSTTDSGFVLYHYTPSKA) lie on the Extracellular side of the membrane. A helical membrane pass occupies residues 19 to 39 (AAIVFVVLFIIMTVIFAVQTL). Residues 40-76 (YAARKSSKALKNNPFESSDDKVDSLEDAEYKQLKITP) lie on the Cytoplasmic side of the membrane. The chain crosses the membrane as a helical span at residues 77–97 (TVFAFIPFFTGCIMEAVGYIG). The Extracellular portion of the chain corresponds to 98-111 (RALSSSNPERTTPY). Residues 112–132 (IIQSVLLLVAPALIAATIYMI) traverse the membrane as a helical segment. The Cytoplasmic portion of the chain corresponds to 133 to 154 (FGRLLHVMRCQSLILISARFGT). A helical transmembrane segment spans residues 155–175 (TFFVVGDVFSFFLQAAGGGLM). Residues 176-183 (SKAGSTKT) lie on the Extracellular side of the membrane. A helical transmembrane segment spans residues 184-204 (GSGLITAGLFVQVIFFGFFII). Residues 205-226 (NEIRFTVNVKRRCLFYEDISRK) are Cytoplasmic-facing. The chain crosses the membrane as a helical span at residues 227-247 (WIFVNATLLLSSMLILLRSIV). Residues 248–264 (RIVEFIQGFNGYIISHE) are Extracellular-facing. Residues 265-285 (YFIYVFDAVPMLLVIIAFSVG) traverse the membrane as a helical segment. Residues 286 to 303 (SFFGNVFDVIKECQTLSN) are Cytoplasmic-facing.

The protein belongs to the lipid-translocating exporter (LTE) (TC 9.A.26.1) family. In terms of processing, N-glycosylated.

It localises to the cell membrane. Involved in inducible protoporphyrin IX influx and heme efflux. In Saccharomyces cerevisiae (strain ATCC 204508 / S288c) (Baker's yeast), this protein is Protoporphyrin uptake protein 1 (PUG1).